A 600-amino-acid polypeptide reads, in one-letter code: Proline--tRNA ligase (600 aa).

It belongs to the class-II aminoacyl-tRNA synthetase family. ProS type 1 subfamily. In terms of assembly, homodimer.

The protein resides in the cytoplasm. It carries out the reaction tRNA(Pro) + L-proline + ATP = L-prolyl-tRNA(Pro) + AMP + diphosphate. Its function is as follows. Catalyzes the attachment of proline to tRNA(Pro) in a two-step reaction: proline is first activated by ATP to form Pro-AMP and then transferred to the acceptor end of tRNA(Pro). As ProRS can inadvertently accommodate and process non-cognate amino acids such as alanine and cysteine, to avoid such errors it has two additional distinct editing activities against alanine. One activity is designated as 'pretransfer' editing and involves the tRNA(Pro)-independent hydrolysis of activated Ala-AMP. The other activity is designated 'posttransfer' editing and involves deacylation of mischarged Ala-tRNA(Pro). The misacylated Cys-tRNA(Pro) is not edited by ProRS. The protein is Proline--tRNA ligase of Synechococcus elongatus (strain ATCC 33912 / PCC 7942 / FACHB-805) (Anacystis nidulans R2).